The sequence spans 497 residues: Acetyl-coenzyme A carboxylase carboxyl transferase subunit beta, chloroplastic (497 aa).

The CoA carboxyltransferase N-terminal domain maps to 230-497 (LWIQCENCYG…FFPLNQNSIK (268 aa)). Zn(2+) is bound by residues Cys-234, Cys-237, Cys-253, and Cys-256. The C4-type zinc finger occupies 234-256 (CENCYGLNYKKFFRSKMNICEQC).

This sequence belongs to the AccD/PCCB family. Acetyl-CoA carboxylase is a heterohexamer composed of biotin carboxyl carrier protein, biotin carboxylase and 2 subunits each of ACCase subunit alpha and ACCase plastid-coded subunit beta (accD). The cofactor is Zn(2+).

It localises to the plastid. The protein localises to the chloroplast stroma. The enzyme catalyses N(6)-carboxybiotinyl-L-lysyl-[protein] + acetyl-CoA = N(6)-biotinyl-L-lysyl-[protein] + malonyl-CoA. Its pathway is lipid metabolism; malonyl-CoA biosynthesis; malonyl-CoA from acetyl-CoA: step 1/1. In terms of biological role, component of the acetyl coenzyme A carboxylase (ACC) complex. Biotin carboxylase (BC) catalyzes the carboxylation of biotin on its carrier protein (BCCP) and then the CO(2) group is transferred by the transcarboxylase to acetyl-CoA to form malonyl-CoA. This chain is Acetyl-coenzyme A carboxylase carboxyl transferase subunit beta, chloroplastic, found in Platanus occidentalis (Sycamore).